Here is a 137-residue protein sequence, read N- to C-terminus: Small ribosomal subunit protein uS12 (137 aa).

Disordered regions lie at residues 1-21 and 34-57; these read MPTI…KSDS and VHTK…TPKK. D102 carries the 3-methylthioaspartic acid modification.

Belongs to the universal ribosomal protein uS12 family. Part of the 30S ribosomal subunit. Contacts proteins S8 and S17. May interact with IF1 in the 30S initiation complex.

In terms of biological role, with S4 and S5 plays an important role in translational accuracy. Functionally, interacts with and stabilizes bases of the 16S rRNA that are involved in tRNA selection in the A site and with the mRNA backbone. Located at the interface of the 30S and 50S subunits, it traverses the body of the 30S subunit contacting proteins on the other side and probably holding the rRNA structure together. The combined cluster of proteins S8, S12 and S17 appears to hold together the shoulder and platform of the 30S subunit. The protein is Small ribosomal subunit protein uS12 of Streptococcus equi subsp. zooepidemicus (strain H70).